Reading from the N-terminus, the 302-residue chain is Probable 2-(5''-triphosphoribosyl)-3'-dephosphocoenzyme-A synthase 1 (302 aa).

It belongs to the CitG/MdcB family.

It carries out the reaction 3'-dephospho-CoA + ATP = 2'-(5''-triphospho-alpha-D-ribosyl)-3'-dephospho-CoA + adenine. This Salmonella typhi protein is Probable 2-(5''-triphosphoribosyl)-3'-dephosphocoenzyme-A synthase 1.